A 133-amino-acid chain; its full sequence is Small ribosomal subunit protein uS8 (133 aa).

It belongs to the universal ribosomal protein uS8 family. As to quaternary structure, part of the 30S ribosomal subunit.

One of the primary rRNA binding proteins, it binds directly to 16S rRNA central domain where it helps coordinate assembly of the platform of the 30S subunit. This chain is Small ribosomal subunit protein uS8, found in Staphylothermus marinus (strain ATCC 43588 / DSM 3639 / JCM 9404 / F1).